The sequence spans 372 residues: N-methyl-L-tryptophan oxidase (372 aa).

4–34 (DLIIIGSGSVGAAAGYYATRAGLNVLMTDAH) contributes to the FAD binding site. C308 is modified (S-8alpha-FAD cysteine).

Belongs to the MSOX/MTOX family. MTOX subfamily. In terms of assembly, monomer. Requires FAD as cofactor.

It catalyses the reaction N(alpha)-methyl-L-tryptophan + O2 + H2O = L-tryptophan + formaldehyde + H2O2. In terms of biological role, catalyzes the oxidative demethylation of N-methyl-L-tryptophan. The sequence is that of N-methyl-L-tryptophan oxidase from Shigella dysenteriae serotype 1 (strain Sd197).